Here is a 356-residue protein sequence, read N- to C-terminus: Terpene synthase 10 (356 aa).

The DDxx(x)D/E motif signature appears at 90–95; that stretch reads DDYLDS. The NDxxSxxxD/E motif signature appears at 232–240; that stretch reads NDAVSYAKE.

It belongs to the terpene synthase family.

The catalysed reaction is geranylgeranyl diphosphate = beta-araneosene + diphosphate. Terpene synthase that converts its substrate farnesyl diphosphate (FPP) into several unidentified sesquiterpenes. TPS10 also converts geranylgeranyl diphosphate (GGPP) into the diterpene beta-araneosene. In Dictyostelium purpureum (Slime mold), this protein is Terpene synthase 10.